The primary structure comprises 694 residues: Nucleolin (694 aa).

A disordered region spans residues 1–277; that stretch reads MVKLAKTPKN…EAKKKKTETP (277 aa). The span at 26–40 shows a compositional bias: acidic residues; the sequence is ESEEEESSDLEESSG. Low complexity predominate over residues 46-108; it reads PPKKQQKAAV…AVVGKGAKNG (63 aa). 5 repeat units span residues 55 to 61, 62 to 68, 69 to 75, 76 to 82, and 84 to 90. The segment at 55–90 is 5 X 7 AA tandem repeats of X-T-P-X-K-K-X; the sequence is VTPAKKAATPAKKAATPAKKAVTPAKKAVATPAKKA. Residues serine 116 and serine 136 each carry the phosphoserine modification. Positions 116–142 are enriched in acidic residues; sequence SEEEDEDDEDDEEDEDEEEESDEEEEP. Over residues 143–168 the composition is skewed to low complexity; that stretch reads AVPVKPAAKKSAAAVPAKKPAVVPAK. Serine 171 is subject to Phosphoserine. The segment covering 171-194 has biased composition (acidic residues); it reads SEEEEEEDDEEEDEEDDESEDEAM. Over residues 196–213 the composition is skewed to low complexity; that stretch reads TTPAPVKKPTPAKATPAK. The segment covering 218–246 has biased composition (acidic residues); it reads SEDEEDEEDEDEDEEDEDDEEEDEEESED. 4 RRM domains span residues 281-357, 371-445, 461-535, and 553-628; these read FSLF…KAKS, RTLF…YTGE, KTLI…FSSP, and KTLF…FAKP. The segment at 631–694 is disordered; sequence EFQRGGGFGG…KPQGKKIKFE (64 aa). Over residues 633-680 the composition is skewed to gly residues; it reads QRGGGFGGGFGGRGGRGGRGGGRGGFGGRGGGRGFGGRGGGFRGGRGG. Positions 681-694 are enriched in basic and acidic residues; sequence GGDHKPQGKKIKFE.

In terms of processing, highly phosphorylated during mitosis.

It is found in the nucleus. It localises to the nucleolus. Nucleolin is the major nucleolar protein of growing eukaryotic cells. It is found associated with intranucleolar chromatin and pre-ribosomal particles. It induces chromatin decondensation by binding to histone H1. It is thought to play a role in pre-rRNA transcription and ribosome assembly. The protein is Nucleolin (NCL) of Gallus gallus (Chicken).